Consider the following 289-residue polypeptide: Bifunctional protein FolD (289 aa).

Residues 165–167 and serine 190 each bind NADP(+); that span reads GAS.

This sequence belongs to the tetrahydrofolate dehydrogenase/cyclohydrolase family. As to quaternary structure, homodimer.

The catalysed reaction is (6R)-5,10-methylene-5,6,7,8-tetrahydrofolate + NADP(+) = (6R)-5,10-methenyltetrahydrofolate + NADPH. The enzyme catalyses (6R)-5,10-methenyltetrahydrofolate + H2O = (6R)-10-formyltetrahydrofolate + H(+). The protein operates within one-carbon metabolism; tetrahydrofolate interconversion. In terms of biological role, catalyzes the oxidation of 5,10-methylenetetrahydrofolate to 5,10-methenyltetrahydrofolate and then the hydrolysis of 5,10-methenyltetrahydrofolate to 10-formyltetrahydrofolate. This Ralstonia pickettii (strain 12J) protein is Bifunctional protein FolD.